The chain runs to 1187 residues: uncharacterized protein (1187 aa).

5 disordered regions span residues 302–405, 419–451, 511–551, 1095–1134, and 1148–1187; these read QKSQ…KPVG, QAFS…RASK, KAPG…LRLE, KSQR…KLPD, and PHLP…PASL. The span at 321–333 shows a compositional bias: low complexity; sequence LPLSGPAGAPPLG. The segment covering 352-361 has biased composition (basic residues); sequence SRRKARHKAS. 2 stretches are compositionally biased toward low complexity: residues 422 to 435 and 517 to 534; these read SPLL…SPAA and GTTL…GEPP. Positions 1096–1107 are enriched in polar residues; the sequence is SQRTPQGEQSRN. The segment covering 1160 to 1174 has biased composition (low complexity); sequence TGGSFSSEGTGSQTS.

This is an uncharacterized protein from Mus musculus (Mouse).